Consider the following 253-residue polypeptide: Imidazole glycerol phosphate synthase subunit HisF (253 aa).

Active-site residues include Asp-11 and Asp-130.

Belongs to the HisA/HisF family. In terms of assembly, heterodimer of HisH and HisF.

Its subcellular location is the cytoplasm. The enzyme catalyses 5-[(5-phospho-1-deoxy-D-ribulos-1-ylimino)methylamino]-1-(5-phospho-beta-D-ribosyl)imidazole-4-carboxamide + L-glutamine = D-erythro-1-(imidazol-4-yl)glycerol 3-phosphate + 5-amino-1-(5-phospho-beta-D-ribosyl)imidazole-4-carboxamide + L-glutamate + H(+). It participates in amino-acid biosynthesis; L-histidine biosynthesis; L-histidine from 5-phospho-alpha-D-ribose 1-diphosphate: step 5/9. IGPS catalyzes the conversion of PRFAR and glutamine to IGP, AICAR and glutamate. The HisF subunit catalyzes the cyclization activity that produces IGP and AICAR from PRFAR using the ammonia provided by the HisH subunit. The sequence is that of Imidazole glycerol phosphate synthase subunit HisF from Dinoroseobacter shibae (strain DSM 16493 / NCIMB 14021 / DFL 12).